The following is a 613-amino-acid chain: Kelch-like protein 21 (613 aa).

One can recognise a BTB domain in the interval 38-105 (FDVTLCAEGK…CYTGRVTVTH (68 aa)). A BACK domain is found at 140-242 (CLEIQDFAEA…RRFYLLAHVE (103 aa)). Kelch repeat units follow at residues 289 to 337 (ILVV…ALGN), 338 to 384 (DIYV…VLKG), 386 to 424 (LYVVGSDSTERYDHTIDCWEALPPMPHPMDNCSTTACRG), 426 to 472 (LYAI…TLNG), 474 to 514 (IYFV…ALGG), and 515 to 562 (RLYV…SIFR).

In terms of assembly, component of the BCR(KLHL21) E3 ubiquitin ligase complex, at least composed of cul3, klhl21 and rbx1.

It localises to the cytoplasm. It is found in the cytoskeleton. The protein localises to the spindle. The protein operates within protein modification; protein ubiquitination. Functionally, substrate-specific adapter of BCR (BTB-CUL3-RBX1) E3 ubiquitin-protein ligase complex required for efficient chromosome alignment and cytokinesis. The BCR(KLHL21) E3 ubiquitin ligase complex regulates localization of the chromosomal passenger complex (CPC) from chromosomes to the spindle midzone in anaphase and mediates the ubiquitination of AURKB. This Danio rerio (Zebrafish) protein is Kelch-like protein 21 (klhl21).